The chain runs to 492 residues: MKGLFLRIIAIVALLLWAIDMVFPWQQIMRSEENRYTAIQSRGKLVVGTINNPISYFIDHAGQAAGLEYELSKAFADYLNVDLEILAMSNGDELFSALKNNKIDIAAANLLYQPNKLDMFQVGPTYNSASWQLVYRKGTERPRSLGELKGSLSIASGSELTELLKVEKEKYPDLIWRVNEKLTPEELLIQMADGKIDYVIANSIDVSAVQQIKPNVAVAFDVTDESTVHWYLPSNSYSELQASLLDFMNSAIETGLIARIEEKYFNHLAQFDYVDTRSYLRAIETVLPKFAPLFEKYKGDLDWCLLAAIAYQESHWNPDATSPTGVRGMMMLTKATAERMRIQDRTDPEQSIKAGSEYLHWLITQMPDTIKEDERIWFALAAYNMGLGHLLDARRLTKSLGGDPDNWLDVKKNLPLLAEKRYYTGLKYGYARGYEAYHYVENIRRYMNSIVHYYRVQQAQIEETLDTQAAEIENINEIKKETDTLATTVTTQ.

The first 18 residues, 1–18, serve as a signal peptide directing secretion; the sequence is MKGLFLRIIAIVALLLWA. The tract at residues 19 to 268 is non-LT domain; it reads IDMVFPWQQI…RIEEKYFNHL (250 aa). Residues 270 to 492 form an LT domain region; the sequence is QFDYVDTRSY…DTLATTVTTQ (223 aa). The active site involves Glu313.

This sequence in the N-terminal section; belongs to the bacterial solute-binding protein 3 family. The protein in the C-terminal section; belongs to the transglycosylase Slt family.

It localises to the cell outer membrane. The enzyme catalyses Exolytic cleavage of the (1-&gt;4)-beta-glycosidic linkage between N-acetylmuramic acid (MurNAc) and N-acetylglucosamine (GlcNAc) residues in peptidoglycan, from either the reducing or the non-reducing ends of the peptidoglycan chains, with concomitant formation of a 1,6-anhydrobond in the MurNAc residue.. Murein-degrading enzyme that degrades murein glycan strands and insoluble, high-molecular weight murein sacculi, with the concomitant formation of a 1,6-anhydromuramoyl product. Lytic transglycosylases (LTs) play an integral role in the metabolism of the peptidoglycan (PG) sacculus. Their lytic action creates space within the PG sacculus to allow for its expansion as well as for the insertion of various structures such as secretion systems and flagella. This Pasteurella multocida (strain Pm70) protein is Membrane-bound lytic murein transglycosylase F.